Reading from the N-terminus, the 156-residue chain is Large ribosomal subunit protein uL15 (156 aa).

Residues 25–48 (RGIGCGKGKTSGRGHKGQKARSGV) form a disordered region. Positions 34 to 43 (TSGRGHKGQK) are enriched in basic residues.

It belongs to the universal ribosomal protein uL15 family. In terms of assembly, part of the 50S ribosomal subunit.

Its function is as follows. Binds to the 23S rRNA. This Wolbachia pipientis subsp. Culex pipiens (strain wPip) protein is Large ribosomal subunit protein uL15.